The following is a 340-amino-acid chain: Ava biosynthesis cluster protein G (340 aa).

A run of 4 helical transmembrane segments spans residues 15–35 (WSAFWLWAIIGGYFAAFNIWN), 81–101 (FMISTDFITSACSVIALLQFV), 118–138 (AFFVMMGFGAPSGIMVAVHAF), and 148–168 (LSIMLTGVLTICFLATSFLCI). N-linked (GlcNAc...) asparagine glycosylation is present at Asn-171. Helical transmembrane passes span 219 to 239 (FSSVYLIIPEVMNWTLGYVAF) and 315 to 335 (SALTAVCLLLRYVGLILWLQI).

Its subcellular location is the membrane. The protein operates within secondary metabolite biosynthesis. Functionally, part of the cluster that mediates the biosynthesis of a highly modified cyclo-arginine-tryptophan dipeptide (cRW). The first step of the pathway is perfornmed by the arginine-containing cyclodipeptide synthase (RCPDS) avaA that acts as the scaffold-generating enzyme and is responsible for formation of the cyclo-Arg-Trp (cRW) diketopiperazine. AvaB then acts as a multifunctional flavoenzyme that is responsible for generating the cyclo-Arg-formylkynurenine DKP, which can be deformylated by avaC. AvaB then further catalyzes an additional N-oxidation followed by cyclization and dehydration. The next step is an N-acetylation of the guanidine group catalyzed by the arginine N-acetyltransferase avaD. The roles of the additional enzymes identified within the ava cluster still have to be determined. The protein is Ava biosynthesis cluster protein G of Aspergillus versicolor.